Consider the following 352-residue polypeptide: Sulfate-binding protein (352 aa).

Positions 1 to 40 are cleaved as a signal peptide; the sequence is MARSAFGWGFSVIAVLMVGSITACNTTTTTEPGQGENASQ.

This sequence belongs to the prokaryotic sulfate-binding protein family.

Its subcellular location is the periplasm. In terms of biological role, this protein specifically binds sulfate and is involved in its transmembrane transport. The protein is Sulfate-binding protein (sbpA) of Synechocystis sp. (strain ATCC 27184 / PCC 6803 / Kazusa).